Consider the following 58-residue polypeptide: Large ribosomal subunit protein uL30 (58 aa).

The protein belongs to the universal ribosomal protein uL30 family. In terms of assembly, part of the 50S ribosomal subunit.

The chain is Large ribosomal subunit protein uL30 from Wigglesworthia glossinidia brevipalpis.